Reading from the N-terminus, the 507-residue chain is Aldehyde dehydrogenase 1, mitochondrial (507 aa).

Residues 1–21 (MLATRNLVPIIRASIKWRIKL) constitute a mitochondrion transit peptide. 266-271 (GSTLVG) serves as a coordination point for NAD(+). Catalysis depends on residues Glu289 and Cys323.

This sequence belongs to the aldehyde dehydrogenase family. As to quaternary structure, homotetramer.

It is found in the mitochondrion matrix. It carries out the reaction an aldehyde + NAD(+) + H2O = a carboxylate + NADH + 2 H(+). It functions in the pathway alcohol metabolism; ethanol degradation; acetate from ethanol: step 2/2. This is Aldehyde dehydrogenase 1, mitochondrial (ALD1) from Saccharomyces cerevisiae (Baker's yeast).